Here is a 292-residue protein sequence, read N- to C-terminus: RNA 5'-monophosphate methyltransferase (292 aa).

Positions 1–22 (MAASTEQATGGVEKTAAEEKPR) are disordered. S-adenosyl-L-methionine contacts are provided by residues Arg46, Asn76, Asp110, 135-136 (DF), and Met164. A Bin3-type SAM domain is found at 53-274 (ELLRRLFPQS…KQATETHPIP (222 aa)).

Belongs to the methyltransferase superfamily. Interacts with DICER1; the interaction may be mediated by RNA.

Its subcellular location is the cytoplasm. The enzyme catalyses a 5'-end 5'-phospho-ribonucleoside-RNA + S-adenosyl-L-methionine = a 5'-end (5'-methylphospho)-ribonucleoside-RNA + S-adenosyl-L-homocysteine. It catalyses the reaction a 5'-end 5'-phospho-ribonucleoside-RNA + 2 S-adenosyl-L-methionine = a 5'-end (5'-bismethylphospho)-ribonucleoside-RNA + 2 S-adenosyl-L-homocysteine. Its function is as follows. O-methyltransferase that specifically monomethylates 5'-monophosphate of cytoplasmic histidyl tRNA (tRNA(His)), acting as a capping enzyme by protecting tRNA(His) from cleavage by DICER1. Also able, with less efficiently, to methylate the 5' monophosphate of a subset of pre-miRNAs, acting as a negative regulator of miRNA processing. The 5' monophosphate of pre-miRNAs is recognized by DICER1 and is required for pre-miRNAs processing: methylation at this position reduces the processing of pre-miRNAs by DICER1. Was also reported to mediate dimethylation of pre-miR-145; however dimethylation cannot be reproduced by another group which observes a monomethylation of pre-miR-145. The chain is RNA 5'-monophosphate methyltransferase (BCDIN3D) from Bos taurus (Bovine).